Reading from the N-terminus, the 336-residue chain is Lipoyl synthase (336 aa).

Positions 81, 86, 92, 107, 111, 114, and 323 each coordinate [4Fe-4S] cluster. The region spanning 93–312 (FGHGTATFMI…EDYGYELGFS (220 aa)) is the Radical SAM core domain.

Belongs to the radical SAM superfamily. Lipoyl synthase family. [4Fe-4S] cluster serves as cofactor.

It localises to the cytoplasm. It catalyses the reaction [[Fe-S] cluster scaffold protein carrying a second [4Fe-4S](2+) cluster] + N(6)-octanoyl-L-lysyl-[protein] + 2 oxidized [2Fe-2S]-[ferredoxin] + 2 S-adenosyl-L-methionine + 4 H(+) = [[Fe-S] cluster scaffold protein] + N(6)-[(R)-dihydrolipoyl]-L-lysyl-[protein] + 4 Fe(3+) + 2 hydrogen sulfide + 2 5'-deoxyadenosine + 2 L-methionine + 2 reduced [2Fe-2S]-[ferredoxin]. It functions in the pathway protein modification; protein lipoylation via endogenous pathway; protein N(6)-(lipoyl)lysine from octanoyl-[acyl-carrier-protein]: step 2/2. Its function is as follows. Catalyzes the radical-mediated insertion of two sulfur atoms into the C-6 and C-8 positions of the octanoyl moiety bound to the lipoyl domains of lipoate-dependent enzymes, thereby converting the octanoylated domains into lipoylated derivatives. This Stenotrophomonas maltophilia (strain R551-3) protein is Lipoyl synthase.